A 231-amino-acid polypeptide reads, in one-letter code: 7-cyano-7-deazaguanine synthase (231 aa).

An ATP-binding site is contributed by 7-17 (LSSGLDSVAAL). Residues cysteine 195, cysteine 203, cysteine 206, and cysteine 209 each contribute to the Zn(2+) site.

Belongs to the QueC family. Requires Zn(2+) as cofactor.

It carries out the reaction 7-carboxy-7-deazaguanine + NH4(+) + ATP = 7-cyano-7-deazaguanine + ADP + phosphate + H2O + H(+). Its pathway is purine metabolism; 7-cyano-7-deazaguanine biosynthesis. In terms of biological role, catalyzes the ATP-dependent conversion of 7-carboxy-7-deazaguanine (CDG) to 7-cyano-7-deazaguanine (preQ(0)). This is 7-cyano-7-deazaguanine synthase from Methanosarcina barkeri (strain Fusaro / DSM 804).